The chain runs to 177 residues: ATP synthase subunit delta (177 aa).

The protein belongs to the ATPase delta chain family. As to quaternary structure, F-type ATPases have 2 components, F(1) - the catalytic core - and F(0) - the membrane proton channel. F(1) has five subunits: alpha(3), beta(3), gamma(1), delta(1), epsilon(1). F(0) has three main subunits: a(1), b(2) and c(10-14). The alpha and beta chains form an alternating ring which encloses part of the gamma chain. F(1) is attached to F(0) by a central stalk formed by the gamma and epsilon chains, while a peripheral stalk is formed by the delta and b chains.

Its subcellular location is the cell inner membrane. Its function is as follows. F(1)F(0) ATP synthase produces ATP from ADP in the presence of a proton or sodium gradient. F-type ATPases consist of two structural domains, F(1) containing the extramembraneous catalytic core and F(0) containing the membrane proton channel, linked together by a central stalk and a peripheral stalk. During catalysis, ATP synthesis in the catalytic domain of F(1) is coupled via a rotary mechanism of the central stalk subunits to proton translocation. In terms of biological role, this protein is part of the stalk that links CF(0) to CF(1). It either transmits conformational changes from CF(0) to CF(1) or is implicated in proton conduction. The polypeptide is ATP synthase subunit delta (Shewanella sp. (strain ANA-3)).